The following is a 268-amino-acid chain: Undecaprenyl-diphosphatase (268 aa).

8 consecutive transmembrane segments (helical) span residues V8 to L28, A41 to L61, F83 to K103, V108 to W128, F144 to V164, A184 to F204, I218 to L238, and F246 to L266.

This sequence belongs to the UppP family.

The protein localises to the cell inner membrane. It carries out the reaction di-trans,octa-cis-undecaprenyl diphosphate + H2O = di-trans,octa-cis-undecaprenyl phosphate + phosphate + H(+). Its function is as follows. Catalyzes the dephosphorylation of undecaprenyl diphosphate (UPP). Confers resistance to bacitracin. This Bradyrhizobium diazoefficiens (strain JCM 10833 / BCRC 13528 / IAM 13628 / NBRC 14792 / USDA 110) protein is Undecaprenyl-diphosphatase.